The following is a 2410-amino-acid chain: Dual specificity protein kinase splA (2410 aa).

Disordered stretches follow at residues 29-48 (NNNNNNNNNNNNNNNNNNNN), 66-103 (NHPSLKIPPPPSPTSPYVRRHARQHSRSNSSNSPGELT), 116-158 (NTQT…SNGG), 187-252 (NISP…SSGI), 508-647 (QQLQ…VPSA), and 659-820 (SSSS…KKEG). Low complexity-rich tracts occupy residues 116–128 (NTQTSPPTSTSPN) and 137–158 (NTTTSSTTITRNSNNINNSNGG). The span at 514–525 (QPPPTIQPPPQQ) shows a compositional bias: pro residues. Residues 530–544 (LRGNRSSGNLSGLNS) show a composition bias toward low complexity. Polar residues predominate over residues 545-554 (FSLKQSTDSL). Low complexity predominate over residues 560 to 583 (SQQSTVSSNSTPIAATPISPLTAP). Residues 584-594 (TSPPPPPPPPT) show a composition bias toward pro residues. Low complexity-rich tracts occupy residues 595–618 (NFNSKFNNNNNNNINNSSNNNTTV), 627–639 (VLPKSPSSRSPRP), 659–686 (SSSSNISTNNTDLNLSSSSSSSPPLNIS), 701–738 (SPSYKQQQQQQQQQQQQQQQLNNSSNSSYSPKPRSPSV), 746–759 (ISPNSSPIGSPNIS), and 777–813 (NTNNNNNNNNNNNNNNNNNNNNNNNNNNNNNNNNNTN). B30.2/SPRY domains lie at 822–1004 (SSWF…GPFS) and 1020–1209 (DSGG…PPFK). Disordered regions lie at residues 1228-1428 (PNGN…NNIY) and 1493-1512 (SLGVSFSSPSSSPKTSPRKI). 4 stretches are compositionally biased toward low complexity: residues 1229–1359 (NGNN…NNNI), 1373–1399 (SSTGSLGGNNSSGNNNSSSGSIGNNSS), 1419–1428 (SSTNNNNNIY), and 1493–1507 (SLGVSFSSPSSSPKT). The B30.2/SPRY 3 domain maps to 1481 to 1703 (PITASTNHTL…CVATFPGGHF (223 aa)). Residues 1734 to 1798 (WAPNDVAIWL…INRLNRMIQI (65 aa)) enclose the SAM domain. Residues 1862 to 2105 (KSYTQKEIED…PPPPPQLPVR (244 aa)) form a disordered region. The segment covering 1865–1874 (TQKEIEDRNR) has biased composition (basic and acidic residues). A compositionally biased stretch (low complexity) spans 1951–1967 (SVSSTGGSSGFLTFPSS). Over residues 1989–2002 (ITSNYKGITNTGQP) the composition is skewed to polar residues. The span at 2020–2070 (SNNGNNGNNNNNNNNNNIKANQQQQQQSSYQQSQTQQQQQHITSTSTSTTN) shows a compositional bias: low complexity. Residues 2089–2102 (PSRPPPPPPPPPQL) show a composition bias toward pro residues. Residues 2115-2387 (LEFGQTIGKG…FKQIIVHLKE (273 aa)) form the Protein kinase domain. ATP contacts are provided by residues 2121-2129 (IGKGFFGEV) and lysine 2142. Aspartate 2243 acts as the Proton acceptor in catalysis.

The protein belongs to the protein kinase superfamily. TKL Tyr protein kinase family. In terms of processing, tyrosine kinase domain is capable of autophosphorylation, in vitro; however it is also autophosphorylated on serine and threonine residues.

It catalyses the reaction L-tyrosyl-[protein] + ATP = O-phospho-L-tyrosyl-[protein] + ADP + H(+). In terms of biological role, essential for spore differentiation. The sequence is that of Dual specificity protein kinase splA (splA) from Dictyostelium discoideum (Social amoeba).